The following is a 527-amino-acid chain: Tubulin-specific chaperone E (527 aa).

At Ser2 the chain carries N-acetylserine. Residues 27 to 71 enclose the CAP-Gly domain; it reads GVVPPVAGPWLGVEWDNPERGKHDGSHEGTVYFQCRHPTGGSFIR. LRR repeat units lie at residues 154–175, 180–200, 205–226, 230–252, 253–274, 278–299, and 308–329; these read NIRK…IHIA, HLEV…SVLT, ALKV…RCAM, GLEE…DVLQ, TVKL…YLIA, RLEQ…DAGI, and SLKY…NELD. Residues 342-384 form the LRRCT domain; it reads NPLTKEDKEAETARLLIIASIGQLKTLNKCEILPEERRRAELD. Lys463 is subject to N6-acetyllysine. At Ser495 the chain carries Phosphoserine.

Belongs to the TBCE family. In terms of assembly, supercomplex made of cofactors A to E. Cofactors A and D function by capturing and stabilizing tubulin in a quasi-native conformation. Cofactor E binds to the cofactor D-tubulin complex; interaction with cofactor C then causes the release of tubulin polypeptides that are committed to the native state. Cofactors B and E can form a heterodimer which binds to alpha-tubulin and enhances their ability to dissociate tubulin heterodimers. Interacts with TBCD.

The protein localises to the cytoplasm. Its subcellular location is the cytoskeleton. Its function is as follows. Tubulin-folding protein; involved in the second step of the tubulin folding pathway and in the regulation of tubulin heterodimer dissociation. Required for correct organization of microtubule cytoskeleton and mitotic splindle, and maintenance of the neuronal microtubule network. The chain is Tubulin-specific chaperone E (TBCE) from Pongo abelii (Sumatran orangutan).